Reading from the N-terminus, the 468-residue chain is ATP synthase subunit beta (468 aa).

155–162 is an ATP binding site; the sequence is GGAGVGKT.

This sequence belongs to the ATPase alpha/beta chains family. As to quaternary structure, F-type ATPases have 2 components, CF(1) - the catalytic core - and CF(0) - the membrane proton channel. CF(1) has five subunits: alpha(3), beta(3), gamma(1), delta(1), epsilon(1). CF(0) has three main subunits: a(1), b(2) and c(9-12). The alpha and beta chains form an alternating ring which encloses part of the gamma chain. CF(1) is attached to CF(0) by a central stalk formed by the gamma and epsilon chains, while a peripheral stalk is formed by the delta and b chains.

The protein resides in the cell membrane. The enzyme catalyses ATP + H2O + 4 H(+)(in) = ADP + phosphate + 5 H(+)(out). Produces ATP from ADP in the presence of a proton gradient across the membrane. The catalytic sites are hosted primarily by the beta subunits. This chain is ATP synthase subunit beta, found in Bacillus cereus (strain ATCC 10987 / NRS 248).